The following is a 62-amino-acid chain: Photosystem II reaction center protein Z (62 aa).

The next 2 helical transmembrane spans lie at 8 to 28 and 41 to 61; these read SVFA…VVLA and FSGA…NSFI.

The protein belongs to the PsbZ family. PSII is composed of 1 copy each of membrane proteins PsbA, PsbB, PsbC, PsbD, PsbE, PsbF, PsbH, PsbI, PsbJ, PsbK, PsbL, PsbM, PsbT, PsbY, PsbZ, Psb30/Ycf12, at least 3 peripheral proteins of the oxygen-evolving complex and a large number of cofactors. It forms dimeric complexes.

The protein resides in the plastid. It is found in the chloroplast thylakoid membrane. Its function is as follows. May control the interaction of photosystem II (PSII) cores with the light-harvesting antenna, regulates electron flow through the 2 photosystem reaction centers. PSII is a light-driven water plastoquinone oxidoreductase, using light energy to abstract electrons from H(2)O, generating a proton gradient subsequently used for ATP formation. The protein is Photosystem II reaction center protein Z of Chaetosphaeridium globosum (Charophycean green alga).